The following is a 202-amino-acid chain: Probable septum site-determining protein MinC (202 aa).

Belongs to the MinC family. Interacts with MinD and FtsZ.

In terms of biological role, cell division inhibitor that blocks the formation of polar Z ring septums. Rapidly oscillates between the poles of the cell to destabilize FtsZ filaments that have formed before they mature into polar Z rings. Prevents FtsZ polymerization. In Dictyoglomus turgidum (strain DSM 6724 / Z-1310), this protein is Probable septum site-determining protein MinC.